The following is a 240-amino-acid chain: Large ribosomal subunit protein uL2 (240 aa).

Positions 1–11 (MGKRLISQNRG) are enriched in polar residues. Disordered stretches follow at residues 1–31 (MGKRLISQNRGRGTPKYRSPSHKRKGAVKYR) and 206–240 (GGGRHQHLGKPSSVSRHTSPGRKVGHIASRRTGRK). Composition is skewed to basic residues over residues 13–28 (GTPKYRSPSHKRKGAV) and 224–240 (SPGRKVGHIASRRTGRK).

It belongs to the universal ribosomal protein uL2 family. As to quaternary structure, part of the 50S ribosomal subunit. Forms a bridge to the 30S subunit in the 70S ribosome.

In terms of biological role, one of the primary rRNA binding proteins. Required for association of the 30S and 50S subunits to form the 70S ribosome, for tRNA binding and peptide bond formation. It has been suggested to have peptidyltransferase activity; this is somewhat controversial. Makes several contacts with the 16S rRNA in the 70S ribosome. This is Large ribosomal subunit protein uL2 from Methanococcus maripaludis (strain C6 / ATCC BAA-1332).